The following is a 238-amino-acid chain: Tyrosine recombinase XerD-like (238 aa).

The region spanning 1–75 is the Core-binding (CB) domain; sequence MKLPNEIDEY…SANQYLLFLY (75 aa). The Tyr recombinase domain maps to 90–238; sequence VQKKSQTAQS…TITTLEKYYR (149 aa). Active-site residues include Lys154 and Arg204. Tyr236 functions as the O-(3'-phospho-DNA)-tyrosine intermediate in the catalytic mechanism.

This sequence belongs to the 'phage' integrase family. XerD-like subfamily.

Its subcellular location is the cytoplasm. Functionally, putative tyrosine recombinase. Not involved in the cutting and rejoining of the recombining DNA molecules on dif(SL) site. The chain is Tyrosine recombinase XerD-like (ynbA) from Lactococcus lactis subsp. lactis (strain IL1403) (Streptococcus lactis).